A 683-amino-acid chain; its full sequence is MLLLKAKKAIIENLSEVSSTQAETDWDMSTPTIITNTSKSERTAYSKIGVIPSVNLYSSTLTSFCKLYHPLTLNQTQPQTGTLRLLPHEKPLILQDLSNYVKLLTSQNVCHDTEANTEYNAAVQTQKTSMECPTYLELRQFVINLSSFLNGCYVKRSTHIEPFQLQLILHTFYFLISIKSPESTNRLFDIFKEYFGLREMDPDMLQIFKQKASIFLIPRRHGKTWIVVAIISMLLTSVENIHVGYVAHQKHVANSVFTEIINTLQKWFPSRYIDIKKENGTIIYKSPDKKPSTLMCATCFNKNSIRGQTFNLLYIDEANFIKKDSLPAILGFMLQKDAKLIFISSVNSGDRATSFLFNLKNASEKMLNIVNYICPDHKDDFSLQDSLISCPCYKLYIPTYITIDETIKNTTNLFLDGAFTTELMGDMSGISKSNMHKVISEMAITQFDLCRADTTKPEITQCLNSTMYIYIDPAYTNNSEASGTGIGAILTFKNNSSKCIIVGMEHYFLKDLTGTATYQIASCACSLIRASLVLYPHIQCVHVAVEGNSSQDSAVAISTLINECSPIKVYFIHYKDKTTTMQWPIYMLGAEKSIAFESFIYAINSGTISASQSIISNTIKLSFDPISYLIEQIRSIRCYPLRDGSHTYCAKKRTVSDDVLVAVVMAYFFATSNKHIFKPLNST.

Residues 217 to 224 (IPRRHGKT) carry the Walker A motif motif. Residues 312–317 (LLYIDE) carry the Walker B motif motif. Glutamate 317 functions as the For ATPase activity in the catalytic mechanism. Residues aspartate 472, glutamate 546, and aspartate 658 each act as for nuclease activity in the active site.

Belongs to the herpesviridae TRM3 protein family. In terms of assembly, interacts with the terminase subunits TRM1 and TRM2. Interacts with portal protein.

Its subcellular location is the host nucleus. Its function is as follows. Component of the molecular motor that translocates viral genomic DNA in empty capsid during DNA packaging. Forms a tripartite terminase complex together with TRM1 and TRM2 in the host cytoplasm. Once the complex reaches the host nucleus, it interacts with the capsid portal vertex. This portal forms a ring in which genomic DNA is translocated into the capsid. TRM3 carries an RNase H-like nuclease activity that plays an important role for the cleavage of concatemeric viral DNA into unit length genomes. The protein is Tripartite terminase subunit 3 of Saimiri sciureus (Common squirrel monkey).